The chain runs to 167 residues: Cytochrome b6-f complex subunit 4 (167 aa).

3 consecutive transmembrane segments (helical) span residues 36–56 (LLYI…GLAV), 95–115 (LLGV…PFLE), and 131–151 (TVFL…TLPI).

Belongs to the cytochrome b family. PetD subfamily. In terms of assembly, the 4 large subunits of the cytochrome b6-f complex are cytochrome b6, subunit IV (17 kDa polypeptide, petD), cytochrome f and the Rieske protein, while the 4 small subunits are petG, petL, petM and petN. The complex functions as a dimer.

It is found in the plastid. It localises to the chloroplast thylakoid membrane. Component of the cytochrome b6-f complex, which mediates electron transfer between photosystem II (PSII) and photosystem I (PSI), cyclic electron flow around PSI, and state transitions. The protein is Cytochrome b6-f complex subunit 4 of Calycanthus floridus var. glaucus (Eastern sweetshrub).